The chain runs to 341 residues: Anthranilate phosphoribosyltransferase (341 aa).

Residues Gly-79, 82–83, Thr-87, 89–92, 107–115, and Ser-119 each bind 5-phospho-alpha-D-ribose 1-diphosphate; these read GD, NIST, and KHGNRSISS. Anthranilate is bound at residue Gly-79. Ser-91 provides a ligand contact to Mg(2+). Asn-110 is an anthranilate binding site. Arg-164 serves as a coordination point for anthranilate. Mg(2+) contacts are provided by Asp-222 and Glu-223.

The protein belongs to the anthranilate phosphoribosyltransferase family. As to quaternary structure, homodimer. Mg(2+) serves as cofactor.

It catalyses the reaction N-(5-phospho-beta-D-ribosyl)anthranilate + diphosphate = 5-phospho-alpha-D-ribose 1-diphosphate + anthranilate. Its pathway is amino-acid biosynthesis; L-tryptophan biosynthesis; L-tryptophan from chorismate: step 2/5. Its function is as follows. Catalyzes the transfer of the phosphoribosyl group of 5-phosphorylribose-1-pyrophosphate (PRPP) to anthranilate to yield N-(5'-phosphoribosyl)-anthranilate (PRA). This chain is Anthranilate phosphoribosyltransferase, found in Blochmanniella pennsylvanica (strain BPEN).